The sequence spans 137 residues: MLVIILGIIGLLASSNLVSSSTSTRVGGHLPLTFDPPENELGYWCTYVESCRFCWDCEDGICTSRVWGNNSTSIVENDYVKYCEVSRWGNLCRYDVEEHIYHSMNCSDPKPWNPYKIARKEWKKNEHPRKDLKKDEF.

The signal sequence occupies residues Met-1–Ser-20. N-linked (GlcNAc...) asparagine; by host glycosylation is found at Asn-69, Asn-70, and Asn-105.

It belongs to the asfivirus MGF 110 family.

Its function is as follows. Plays a role in virus cell tropism, and may be required for efficient virus replication in macrophages. The protein is Protein MGF 110-7L of African swine fever virus (isolate Warthog/Namibia/Wart80/1980) (ASFV).